Consider the following 406-residue polypeptide: MVLIIDGQTSGLAGNMFIGAFIDLGANKDDIINVIKTYANEFGDIDITITKQPKSGIMCTYAQINTTDKSTRHYNEIIEKLDDITQKHYPDNEIILKTINLSKKIFKTLAIAESKVHGKSLDQLHFHEVGCADAVADIIGSSYAYYLLNLDKEKVYSLPVATGSGTVKTQHGILPVPAPAVLNILKNVPTIGGCVNTEICTPTGCAILVNITDEYVSSYPYVTRKTIGYGAGKKDLEVLNALRLVHANSVTKNDTVTILETNIDTLSGEVLGSLYDKLLSEGARDVTITPTIMKKNRPGQIIKVICRNNDAQHITNVLMEETGTLGVRVIPTVHRGVAIRENIHEKININGTWEDVRFKIGYINDKIIKCTPEYDDIKKIANKTSIPIKDLIKYVEMEYRINNRGD.

The protein belongs to the LarC family.

The polypeptide is Putative nickel insertion protein (Methanosphaera stadtmanae (strain ATCC 43021 / DSM 3091 / JCM 11832 / MCB-3)).